Here is an 89-residue protein sequence, read N- to C-terminus: Small ribosomal subunit protein uS15 (89 aa).

Belongs to the universal ribosomal protein uS15 family. In terms of assembly, part of the 30S ribosomal subunit. Forms a bridge to the 50S subunit in the 70S ribosome, contacting the 23S rRNA.

Functionally, one of the primary rRNA binding proteins, it binds directly to 16S rRNA where it helps nucleate assembly of the platform of the 30S subunit by binding and bridging several RNA helices of the 16S rRNA. Its function is as follows. Forms an intersubunit bridge (bridge B4) with the 23S rRNA of the 50S subunit in the ribosome. The protein is Small ribosomal subunit protein uS15 of Mannheimia succiniciproducens (strain KCTC 0769BP / MBEL55E).